A 435-amino-acid chain; its full sequence is Serine protease snk (435 aa).

An N-terminal signal peptide occupies residues 1–27 (MIILWSLIVHLQLTCLHLILQTPNLEA). One can recognise a Clip domain in the interval 92 to 138 (FCRRSFDGRSGYCILAYQCLHVIREYRVHGTRIDICTHRNNVPVICC). Intrachain disulfides connect C93–C137, C104–C127, C110–C138, C179–C303, C220–C236, C346–C366, and C377–C408. The 247-residue stretch at 186-432 (IVGGTPTRHG…YLDWIEKIAF (247 aa)) folds into the Peptidase S1 domain. Residue H235 is the Charge relay system of the active site. An N-linked (GlcNAc...) asparagine glycan is attached at N255. The active-site Charge relay system is D283. S381 serves as the catalytic Charge relay system.

Belongs to the peptidase S1 family. CLIP subfamily. As to quaternary structure, interacts (via N-terminal prodomain) with ea/easter (via Peptidase domain); leads to proteolytic activation of ea by snk. This interaction does not require sulfation of a vitelline membrane component by pip but proteolytic cleavage of ea by snk does. In terms of processing, proteolytically activated by gd. May also be cleaved by another protease.

Its subcellular location is the secreted. In terms of biological role, component of the extracellular signaling pathway that establishes the dorsal-ventral pathway of the embryo. A protease cascade involving ndl, gd, snk and ea results in activation of the spz Toll receptor ligand; acts downstream of ndl and gd. Activation of ea requires both activation of the ndl-gd-snk protease cascade and sulfation of a vitelline membrane component by pip. Localized activation of the Toll receptor in the ventral region of the embryo defines cell identities along the dorsal-ventral continuum. The polypeptide is Serine protease snk (Drosophila melanogaster (Fruit fly)).